We begin with the raw amino-acid sequence, 140 residues long: PDZ domain-containing protein 11 (140 aa).

The PDZ domain maps to 47–129 (IVTLKKPPGA…ISMRVRFFPY (83 aa)).

In terms of assembly, interacts with ATP2B1, ATP2B2, ATP2B3, ATP2B4 and ATP7A. Interacts with PLEKHA7 (via WW domains) at zonula adherens; this interaction is essential for the interaction between PLEKHA7 and the ADAM10-binding protein TSPAN33. Interacts with SLC5A6.

It is found in the cytoplasm. The protein resides in the cell junction. The protein localises to the adherens junction. Its subcellular location is the cell membrane. In terms of biological role, mediates docking of ADAM10 to zonula adherens by interacting with PLEKHA7 which is required for PLEKHA7 to interact with the ADAM10-binding protein TSPAN33. The protein is PDZ domain-containing protein 11 (PDZD11) of Bos taurus (Bovine).